The primary structure comprises 658 residues: Outer dynein arm-docking complex subunit 1 (658 aa).

3 coiled-coil regions span residues 11-156 (KEVH…RYLN), 186-234 (REEA…KNDE), and 303-380 (NFIN…TDIQ). Disordered regions lie at residues 496 to 552 (DEEE…SVSH) and 574 to 658 (GAPV…RGYN). 4 positions are modified to phosphoserine: S500, S506, S507, and S509. 4 stretches are compositionally biased toward low complexity: residues 506–519 (SSPS…QISL), 574–583 (GAPVSSRSSQ), 592–604 (TSSS…TGYL), and 621–639 (SMGS…HASS).

The protein belongs to the ODA1/DCC2 family. In terms of assembly, component of the outer dynein arm-docking complex along with ODAD2, ODAD3, ODAD4 and CLXN. Interacts with ODAD3. Interacts with ODAD4; this interaction may facilitate the recruitment and/or attachment of outer dynein arm docking complex proteins including ODAD1, ODAD3, and ODAD4 to ciliary axonemes. Interacts with DNAH9. Interacts with MNS1. Interacts with PIERCE1 and PIERCE2; the interactions link the outer dynein arms docking complex (ODA-DC) to the internal microtubule inner proteins (MIP) in cilium axoneme. As to expression, expressed in motile ciliated tissues.

Its subcellular location is the cytoplasm. It is found in the cytoskeleton. The protein resides in the cilium axoneme. In terms of biological role, component of the outer dynein arm-docking complex that mediates outer dynein arms (ODA) binding onto the doublet microtubule. Involved in mediating assembly of both ODAs and their axonemal docking complex onto ciliary microtubules. This is Outer dynein arm-docking complex subunit 1 (Odad1) from Mus musculus (Mouse).